The primary structure comprises 931 residues: Isoleucine--tRNA ligase (931 aa).

The 'HIGH' region signature appears at 57 to 67; that stretch reads PFANGNIHMGH. Residue Glu-556 coordinates L-isoleucyl-5'-AMP. Residues 597-601 carry the 'KMSKS' region motif; the sequence is KMSKS. ATP is bound at residue Lys-600. The Zn(2+) site is built by Cys-890, Cys-893, Cys-910, and Cys-913.

This sequence belongs to the class-I aminoacyl-tRNA synthetase family. IleS type 1 subfamily. In terms of assembly, monomer. The cofactor is Zn(2+).

It is found in the cytoplasm. The catalysed reaction is tRNA(Ile) + L-isoleucine + ATP = L-isoleucyl-tRNA(Ile) + AMP + diphosphate. Functionally, catalyzes the attachment of isoleucine to tRNA(Ile). As IleRS can inadvertently accommodate and process structurally similar amino acids such as valine, to avoid such errors it has two additional distinct tRNA(Ile)-dependent editing activities. One activity is designated as 'pretransfer' editing and involves the hydrolysis of activated Val-AMP. The other activity is designated 'posttransfer' editing and involves deacylation of mischarged Val-tRNA(Ile). The sequence is that of Isoleucine--tRNA ligase from Lactobacillus delbrueckii subsp. bulgaricus (strain ATCC BAA-365 / Lb-18).